We begin with the raw amino-acid sequence, 2342 residues long: MDGVSSEANEENDNIERPVRRRHSSILKPPRSPLQDLRGGNERVQESNALRNKKNSRRVSFADTIKVFQTESHMKIVRKSEMEGCSAMVPSQLQLLPPGFKRFSCLSLPETETGENLLLIQNKKLEDNYCEITGMNTLLSAPIHTQMQQKEFSIIEHTRERKHANDQTVIFSDENQMDLTSSHTVMITKGLLDNPISEKSTKIDTTSFLANLKLHTEDSRMKKEVNFSVDQNTSSENKIDFNDFIKRLKTGKCSAFPDVPDKENFEIPIYSKEPNSASSTHQMHVSLKEDENNSNITRLFREKDDGMNFTQCHTANIQTLIPTSSETNSRESKGNDITIYGNDFMDLTFNHTLQILPATGNFSEIENQTQNAMDVTTGYGTKASGNKTVFKSKQNTAFQDLSINSADKIHITRSHIMGAETHIVSQTCNQDARILAMTPESIYSNPSIQGCKTVFYSSCNDAMEMTKCLSNMREEKNLLKHDSNYAKMYCNPDAMSSLTEKTIYSGEENMDITKSHTVAIDNQIFKQDQSNVQIAAAPTPEKEMMLQNLMTTSEDGKMNVNCNSVPHVSKERIQQSLSNPLSISLTDRKTELLSGENMDLTESHTSNLGSQVPLAAYNLAPESTSESHSQSKSSSDECEEITKSRNEPFQRSDIIAKNSLTDTWNKDKDWVLKILPYLDKDSPQSADCNQEIATSHNIVYCGGVLDKQITNRNTVSWEQSLFSTTKPLFSSGQFSMKNHDTAISSHTVKSVLGQNSKLAEPLRKSLSNPTPDYCHDKMIICSEEEQNMDLTKSHTVVIGFGPSELQELGKTNLEHTTGQLTTMNRQIAVKVEKCGKSPIEKSGVLKSNCIMDVLEDESVQKPKFPKEKQNVKIWGRKSVGGPKIDKTIVFSEDDKNDMDITKSYTIEINHRPLLEKRDCHLVPLAGTSETILYTCRQDDMEITRSHTTALECKTVSPDEITTRPMDKTVVFVDNHVELEMTESHTVFIDYQEKERTDRPNFELSQRKSLGTPTVICTPTEESVFFPGNGESDRLVANDSQLTPLEEWSNNRGPVEVADNMELSKSATCKNIKDVQSPGFLNEPLSSKSQRRKSLKLKNDKTIVFSENHKNDMDITQSCMVEIDNESALEDKEDFHLAGASKTILYSCGQDDMEITRSHTTALECKTLLPNEIAIRPMDKTVLFTDNYSDLEVTDSHTVFIDCQATEKILEENPKFGIGKGKNLGVSFPKDNSCVQEIAEKQALAVGNKIVLHTEQKQQLFAATNRTTNEIIKFHSAAMDEKVIGKVVDQACTLEKAQVESCQLNNRDRRNVDFTSSHATAVCGSSDNYSCLPNVISCTDNLEGSAMLLCDKDEEKANYCPVQNDLAYANDFASEYYLESEGQPLSAPCPLLEKEEVIQTSTKGQLDCVITLHKDQDLIKDPRNLLANQTLVYSQDLGEMTKLNSKRVSFKLPKDQMKVYVDDIYVIPQPHFSTDQPPLPKKGQSSINKEEVILSKAGNKSLNIIENSSAPICENKPKILNSEEWFAAACKKELKENIQTTNYNTALDFHSNSDVTKQVIQTHVNAGEAPDPVITSNVPCFHSIKPNLNNLNGKTGEFLAFQTVHLPPLPEQLLELGNKAHNDMHIVQATEIHNINIISSNAKDSRDEENKKSHNGAETTSLPPKTVFKDKVRRCSLGIFLPRLPNKRNCSVTGIDDLEQIPADTTDINHLETQPVSSKDSGIGSVAGKLNLSPSQYINEENLPVYPDEINSSDSINIETEEKALIETYQKEISPYENKMGKTCNSQKRTWVQEEEDIHKEKKIRKNEIKFSDTTQDREIFDHHTEEDIDKSANSVLIKNLSRTPSSCSSSLDSIKADGTSLDFSTYRSSQMESQFLRDTICEESLREKLQDGRITIREFFILLQVHILIQKPRQSNLPGNFTVNTPPTPEDLMLSQYVYRPKIQIYREDCEARRQKIEELKLSASNQDKLLVDINKNLWEKMRHCSDKELKAFGIYLNKIKSCFTKMTKVFTHQGKVALYGKLVQSAQNEREKLQIKIDEMDKILKKIDNCLTEMETETKNLEDEEKNNPVEEWDSEMRAAEKELEQLKTEEEELQRNLLELEVQKEQTLAQIDFMQKQRNRTEELLDQLSLSEWDVVEWSDDQAVFTFVYDTIQLTITFEESVVGFPFLDKRYRKIVDVNFQSLLDEDQAPPSSLLVHKLIFQYVEEKESWKKTCTTQHQLPKMLEEFSLVVHHCRLLGEEIEYLKRWGPNYNLMNIDINNNELRLLFSSSAAFAKFEITLFLSAYYPSVPLPSTIQNHVGNTSQDDIATILSKVPLENNYLKNVVKQIYQDLFQDCHFYH.

Residues 1–56 (MDGVSSEANEENDNIERPVRRRHSSILKPPRSPLQDLRGGNERVQESNALRNKKNS) are disordered. The tract at residues 1 to 250 (MDGVSSEANE…FNDFIKRLKT (250 aa)) is may mediate oligomerization. The interval 1 to 728 (MDGVSSEANE…QSLFSTTKPL (728 aa)) is interaction with BUB1 and BUB1B. Interaction with microtubules regions lie at residues 17–34 (RPVR…RSPL) and 53–80 (KKNS…VRKS). The interaction with PP1CA; contains the protein phosphatase 1 (PP1) interaction motifs SILK, RVXF and phi-phi stretch occupies residues 23-80 (HSSILKPPRSPLQDLRGGNERVQESNALRNKKNSRRVSFADTIKVFQTESHMKIVRKS). The residue at position 24 (Ser-24) is a Phosphoserine; by AURKB. Ser-32 is modified (phosphoserine). Ser-60 is modified (phosphoserine; by AURKB). The tract at residues 174–190 (ENQMDLTSSHTVMITKG) is interaction with BUB1. Positions 210–226 (ANLKLHTEDSRMKKEVN) are interaction with BUB1B. The residue at position 539 (Thr-539) is a Phosphothreonine. Ser-578 and Ser-584 each carry phosphoserine. Thr-586 is modified (phosphothreonine). Residues 620–646 (APESTSESHSQSKSSSDECEEITKSRN) are disordered. Residues 622 to 633 (ESTSESHSQSKS) show a composition bias toward low complexity. Position 767 is a phosphoserine (Ser-767). Residues 855–1201 (EDESVQKPKF…VTDSHTVFID (347 aa)) are 2 X 104 AA approximate repeats. Repeat 1 spans residues 885-989 (DKTIVFSEDD…MTESHTVFID (105 aa)). Residue Thr-901 is modified to Phosphothreonine. Phosphoserine is present on residues Ser-956, Ser-1039, Ser-1076, and Ser-1088. The stretch at 1099 to 1201 (DKTIVFSENH…VTDSHTVFID (103 aa)) is repeat 2. Ser-1448 carries the post-translational modification Phosphoserine. Positions 1639 to 1662 (SNAKDSRDEENKKSHNGAETTSLP) are disordered. Positions 1642-1651 (KDSRDEENKK) are enriched in basic and acidic residues. Phosphoserine is present on residues Ser-1675 and Ser-1773. The Nuclear localization signal signature appears at 1789 to 1803 (TWVQEEEDIHKEKKI). Ser-1831 carries the post-translational modification Phosphoserine. Phosphoserine; by TTK occurs at positions 1831 and 1834. Residues Ser-1845 and Ser-1860 each carry the phosphoserine modification. Positions 1981–2108 (KMRHCSDKEL…LLELEVQKEQ (128 aa)) are required for interaction with ZWINT. A coiled-coil region spans residues 2024 to 2133 (VQSAQNEREK…EELLDQLSLS (110 aa)). Positions 2091–2311 (EEEELQRNLL…GNTSQDDIAT (221 aa)) are interaction with NSL1, DSN1 and required for assembly into the outer kinetochore.

Component of the KNL1 complex composed of KNL1 and ZWINT. Part of the ten-subunit outer kinetochore KMN network that includes the KNL1, MIS12 and NDC80 complexes; a bioriented kinetochore contains approximately 150 copies of the network. Interacts (via C-terminus) with the MIS12 complex subunits NSL1 (via C-terminus), PMF1 and DSN1; the interaction is direct. Interacts (via N-terminal region) with BUB1B (via BUB1 N-terminal domain); the interaction is direct and is required for cell cycle arrest upon activation of the mitotic spindle assembly checkpoint. Interacts (via N-terminal region) with BUB1 (via BUB1 N-terminal domain); the interaction is direct. Interacts with the protein phosphatase PP1 subunit PPP1CA; the interaction is direct and mutually exclusive with binding to microtubules. Interacts with the protein phosphatase PP1 subunit PPP1CC; the interaction is direct and mutually exclusive with binding to microtubules. Phosphorylation by AURKB negatively regulates its interaction with protein phosphatase 1 (PP1) subunit PPP1CA and with microtubules. As to expression, highly expressed in testis, where it is localized in germ cells, in particular in spermatocytes and in the pre-acrosome of round spermatids. Detected in the acrosome of ejaculated spermatozoa. Detected in adult thymus, bone marrow, colon, small intestine, appendix and placenta, and in fetal liver and thymus.

It is found in the nucleus. The protein localises to the chromosome. The protein resides in the centromere. It localises to the kinetochore. Its subcellular location is the cytoplasm. Acts as a component of the outer kinetochore KNL1 complex that serves as a docking point for spindle assembly checkpoint components and mediates microtubule-kinetochore interactions. Kinetochores, consisting of a centromere-associated inner segment and a microtubule-contacting outer segment, play a crucial role in chromosome segregation by mediating the physical connection between centromeric DNA and spindle microtubules. The outer kinetochore is made up of the ten-subunit KMN network, comprising the MIS12, NDC80 and KNL1 complexes, and auxiliary microtubule-associated components; together they connect the outer kinetochore with the inner kinetochore, bind microtubules, and mediate interactions with mitotic checkpoint proteins that delay anaphase until chromosomes are bioriented on the spindle. Required for kinetochore binding by a distinct subset of kMAPs (kinetochore-bound microtubule-associated proteins) and motors. Acts in coordination with CENPK to recruit the NDC80 complex to the outer kinetochore. Can bind either to microtubules or to the protein phosphatase 1 (PP1) catalytic subunits PPP1CA and PPP1CC (via overlapping binding sites), it has higher affinity for PP1. Recruits MAD2L1 to the kinetochore and also directly links BUB1 and BUB1B to the kinetochore. In addition to orienting mitotic chromosomes, it is also essential for alignment of homologous chromosomes during meiotic metaphase I. In meiosis I, required to activate the spindle assembly checkpoint at unattached kinetochores to correct erroneous kinetochore-microtubule attachments. This chain is Outer kinetochore KNL1 complex subunit KNL1, found in Homo sapiens (Human).